Reading from the N-terminus, the 360-residue chain is Actin-like protein MamK (360 aa).

ATP contacts are provided by residues Lys22, 33-34, and Asp89; that span reads TS. Glu156 is a Mg(2+) binding site. ATP-binding positions include 177-179, 231-235, and Gly302; these read AGT and KEQFS.

It belongs to the FtsA/MreB family. MamK subfamily. In terms of assembly, forms cytoplasmic filaments. Interacts with MamJ. Forms filaments in the absence of other magnetosome proteins and in E.coli. Filament formation in vitro requires ATP, GTP or a non-hydrolyzable ATP analog.

It is found in the cytoplasm. The protein localises to the cytoskeleton. The enzyme catalyses ATP + H2O = ADP + phosphate + H(+). With respect to regulation, filament dynamics depend partially on MamJ. In terms of biological role, protein with ATPase activity which forms dynamic cytoplasmic filaments that are involved in sorting, concatenating and/or correctly positioning of magnetosomes in the cell. Not absolutely necessary for assembly of short chains. Filaments grow from the both cell poles towards midcell, and are probably disassembled at the other end of the cell, a process known as treadmilling. Polymerizes in the presence of ATP, GTP or a non-hydrolyzable ATP analog. Required for correct segregation and positioning of magnetosomes following cell division. This is Actin-like protein MamK from Magnetospirillum gryphiswaldense (strain DSM 6361 / JCM 21280 / NBRC 15271 / MSR-1).